The chain runs to 685 residues: Translation factor GUF1 homolog, mitochondrial (685 aa).

The transit peptide at 1 to 54 (MFSRLLNRGNGGVNKNITSGLLLRRTTTTTTRLSYINNSPTLSIRSFCSKSTTI) directs the protein to the mitochondrion. In terms of domain architecture, tr-type G spans 68–267 (DRIRNFSIIA…AVIDRIPPPQ (200 aa)). GTP contacts are provided by residues 77–84 (AHIDHGKT), 160–164 (DTPGH), and 214–217 (NKID).

The protein belongs to the TRAFAC class translation factor GTPase superfamily. Classic translation factor GTPase family. LepA subfamily.

The protein resides in the mitochondrion inner membrane. The catalysed reaction is GTP + H2O = GDP + phosphate + H(+). Its function is as follows. Promotes mitochondrial protein synthesis. May act as a fidelity factor of the translation reaction, by catalyzing a one-codon backward translocation of tRNAs on improperly translocated ribosomes. Binds to mitochondrial ribosomes in a GTP-dependent manner. This chain is Translation factor GUF1 homolog, mitochondrial (guf1), found in Dictyostelium discoideum (Social amoeba).